Reading from the N-terminus, the 230-residue chain is Magnesium-protoporphyrin O-methyltransferase (230 aa).

The protein belongs to the class I-like SAM-binding methyltransferase superfamily. Magnesium protoporphyrin O-methyltransferase family.

The enzyme catalyses Mg-protoporphyrin IX + S-adenosyl-L-methionine = Mg-protoporphyrin IX 13-monomethyl ester + S-adenosyl-L-homocysteine. Its pathway is porphyrin-containing compound metabolism; chlorophyll biosynthesis (light-independent). Its function is as follows. Converts Mg-protoporphyrin IX to Mg-protoporphyrin IX methylester using S-adenosyl-L-methionine as a cofactor. This Synechocystis sp. (strain ATCC 27184 / PCC 6803 / Kazusa) protein is Magnesium-protoporphyrin O-methyltransferase (chlM).